A 1460-amino-acid chain; its full sequence is Ankyrin repeat-containing protein kinase A (1460 aa).

Disordered regions lie at residues 1–32, 57–181, 216–259, 272–311, 329–354, 374–510, and 551–608; these read MSIKLPLSNINSGGNSNNSSSSNSTSNNNINI, IKQQ…HKSH, RENE…ASST, STSNAATNTNTNANTTSTTKTTSTVRSTSPTQFKPRVEFD, SSPSDFRLNPPSNVHMPTSSLSTSTS, FTPS…SSNP, and CPSA…SSIP. 3 stretches are compositionally biased toward low complexity: residues 8-32, 61-86, and 111-128; these read SNINSGGNSNNSSSSNSTSNNNINI, SNNNTSTSVCVSSIHSSSPISSPTSH, and SSGSNSSSSSSGSNNNNN. Polar residues predominate over residues 129 to 140; that stretch reads QIKTSNGMNKPN. Over residues 149–162 the composition is skewed to basic and acidic residues; the sequence is KPRENSQNKIDDNK. 2 stretches are compositionally biased toward low complexity: residues 220-259 and 272-300; these read NNNNSSNNNSNNNNNNNNNNNNSNNINNVNGNKSSLASST and STSNAATNTNTNANTTSTTKTTSTVRSTS. Composition is skewed to polar residues over residues 329 to 345 and 384 to 404; these read SSPSDFRLNPPSNVHMP and PTNSSQVDTLQMSTESITIQP. Low complexity predominate over residues 405–422; sequence SSLDSSSESVSDGLQSVS. Residues 423–434 show a composition bias toward polar residues; the sequence is GSPVTASPSPTI. Over residues 435-461 the composition is skewed to low complexity; it reads SNNTNATTTNNNNNTNTNNNNNNNNNQ. Basic residues predominate over residues 462-472; sequence HNHHHHQHSHS. The tract at residues 467–667 is interaction with 14-3-3 protein; it reads HQHSHSQQHD…IFRGCGIPLD (201 aa). Positions 486-497 are enriched in low complexity; sequence PSSPTSPTLLPS. The Phorbol-ester/DAG-type zinc-finger motif lies at 499 to 551; the sequence is THDFSSEYSSNPGGKCAICRKPLWSFPISDKSRRCRDCSLVVHRACVPLATEC. Positions 559 to 568 are enriched in polar residues; that stretch reads SKLSVPNGNQ. The span at 569 to 608 shows a compositional bias: low complexity; that stretch reads SNSSSSSSSSSSSSSSSNSSSSNTKGHSRTPSSPSVSSIP. In terms of domain architecture, GRAM spans 653–724; it reads RDFHFIFRGC…SNIASIEKRS (72 aa). ANK repeat units follow at residues 814 to 843, 852 to 883, 887 to 920, 924 to 955, and 959 to 988; these read SKEILLMSAIKNNNLDMVVTLLNYYCQVNS, KGYTPLHNAVFSECSDQIFMHLLNQKEVRVRE, DGNTPLHYFCQKFKSPECQRIVQAMIEKGANINE, NGETPLHKAIFNHSVRLLMVYILLKNNANVNI, and AGESPLHYAVRLGRLDVAKMLLAAGADPTI. The Protein kinase domain occupies 1112 to 1375; the sequence is LEYTEKIGSG…ATEAMTALAV (264 aa). ATP-binding positions include 1118 to 1126 and K1139; that span reads IGSGASGKV. The active-site Proton acceptor is the D1231. A helical membrane pass occupies residues 1293-1313; it reads MGIVMWEIVYCVVYGCYMIPY. Residues 1425–1460 are a coiled coil; it reads PEEEQIYQEAMEKQRRNQEASANRNQKNKELLNNNN. A disordered region spans residues 1434–1460; that stretch reads AMEKQRRNQEASANRNQKNKELLNNNN.

The protein belongs to the protein kinase superfamily. TKL Ser/Thr protein kinase family.

The protein resides in the cytoplasm. The protein localises to the cytoskeleton. Its subcellular location is the membrane. It localises to the nucleus. It catalyses the reaction L-seryl-[protein] + ATP = O-phospho-L-seryl-[protein] + ADP + H(+). The enzyme catalyses L-threonyl-[protein] + ATP = O-phospho-L-threonyl-[protein] + ADP + H(+). Its function is as follows. Involved in the development of the fruiting body. Overexpression phenocopies the spnA null phenotype. The chain is Ankyrin repeat-containing protein kinase A (arkA) from Dictyostelium discoideum (Social amoeba).